Consider the following 402-residue polypeptide: Speedy protein E5 (402 aa).

Residues 1-89 are disordered; that stretch reads MDRTETRFRK…EEPEKELAPE (89 aa). Polar residues predominate over residues 16–39; sequence EKITTSRQPQPQNEQSPQRSTSGY. Residues 76 to 89 are compositionally biased toward acidic residues; the sequence is DESAEEPEKELAPE.

The protein belongs to the Speedy/Ringo family.

This is Speedy protein E5 (SPDYE5) from Homo sapiens (Human).